A 91-amino-acid polypeptide reads, in one-letter code: Late embryogenis abundant protein 2 (91 aa).

A disordered region spans residues 47–72; it reads KRAGEASSEKAPWVPDPKTGYYRPET.

Belongs to the LEA type 3 family.

Its subcellular location is the cytoplasm. The protein localises to the nucleus. The chain is Late embryogenis abundant protein 2 from Arabidopsis thaliana (Mouse-ear cress).